A 607-amino-acid chain; its full sequence is Chaperone protein DnaK (607 aa).

Position 174 is a phosphothreonine; by autocatalysis (Thr-174). The interval 571-607 (AAMYQKQAQQQQPGPGPDAGKDKDDKDKTVDADYEVK) is disordered. The segment covering 589–607 (AGKDKDDKDKTVDADYEVK) has biased composition (basic and acidic residues).

Belongs to the heat shock protein 70 family.

Acts as a chaperone. In Desulforudis audaxviator (strain MP104C), this protein is Chaperone protein DnaK.